A 245-amino-acid chain; its full sequence is Demethylmenaquinone methyltransferase (245 aa).

S-adenosyl-L-methionine contacts are provided by residues Thr-58, Asp-79, and 106-107 (NA).

This sequence belongs to the class I-like SAM-binding methyltransferase superfamily. MenG/UbiE family.

The catalysed reaction is a 2-demethylmenaquinol + S-adenosyl-L-methionine = a menaquinol + S-adenosyl-L-homocysteine + H(+). It functions in the pathway quinol/quinone metabolism; menaquinone biosynthesis; menaquinol from 1,4-dihydroxy-2-naphthoate: step 2/2. In terms of biological role, methyltransferase required for the conversion of demethylmenaquinol (DMKH2) to menaquinol (MKH2). The sequence is that of Demethylmenaquinone methyltransferase from Halalkalibacterium halodurans (strain ATCC BAA-125 / DSM 18197 / FERM 7344 / JCM 9153 / C-125) (Bacillus halodurans).